We begin with the raw amino-acid sequence, 357 residues long: SNF1-related protein kinase regulatory subunit gamma-like PV42b (357 aa).

4 consecutive CBS domains span residues 16-97 (MIDK…DGES), 113-185 (HCPE…SSQL), 198-273 (AIHN…WLPL), and 293-351 (STPG…ALLS).

The protein belongs to the 5'-AMP-activated protein kinase gamma subunit family. As to expression, expressed highly in rosette leaves, cauline leaves, open flowers, developing siliques and dry seeds, but at a low level in stems and floral buds.

Plays redundant role with PV42a in regulating male gametogenesis and pollen tube guidance. This chain is SNF1-related protein kinase regulatory subunit gamma-like PV42b (PV42B), found in Arabidopsis thaliana (Mouse-ear cress).